We begin with the raw amino-acid sequence, 214 residues long: tRNA (guanine-N(7)-)-methyltransferase (214 aa).

4 residues coordinate S-adenosyl-L-methionine: E44, E69, D96, and D118. Residue D118 is part of the active site. Residue K122 participates in substrate binding. Residues 124 to 129 (RHEKRR) form an interaction with RNA region. Residues D154 and 192 to 195 (TEYE) each bind substrate.

It belongs to the class I-like SAM-binding methyltransferase superfamily. TrmB family.

It carries out the reaction guanosine(46) in tRNA + S-adenosyl-L-methionine = N(7)-methylguanosine(46) in tRNA + S-adenosyl-L-homocysteine. Its pathway is tRNA modification; N(7)-methylguanine-tRNA biosynthesis. In terms of biological role, catalyzes the formation of N(7)-methylguanine at position 46 (m7G46) in tRNA. The chain is tRNA (guanine-N(7)-)-methyltransferase from Lacticaseibacillus casei (strain BL23) (Lactobacillus casei).